The primary structure comprises 235 residues: Phosphoribosylaminoimidazole-succinocarboxamide synthase (235 aa).

The protein belongs to the SAICAR synthetase family.

It carries out the reaction 5-amino-1-(5-phospho-D-ribosyl)imidazole-4-carboxylate + L-aspartate + ATP = (2S)-2-[5-amino-1-(5-phospho-beta-D-ribosyl)imidazole-4-carboxamido]succinate + ADP + phosphate + 2 H(+). Its pathway is purine metabolism; IMP biosynthesis via de novo pathway; 5-amino-1-(5-phospho-D-ribosyl)imidazole-4-carboxamide from 5-amino-1-(5-phospho-D-ribosyl)imidazole-4-carboxylate: step 1/2. This is Phosphoribosylaminoimidazole-succinocarboxamide synthase from Caldanaerobacter subterraneus subsp. tengcongensis (strain DSM 15242 / JCM 11007 / NBRC 100824 / MB4) (Thermoanaerobacter tengcongensis).